The sequence spans 98 residues: NADH-ubiquinone oxidoreductase chain 4L (98 aa).

3 helical membrane passes run 1–21, 29–49, and 61–81; these read MTLI…GLLM, ALLC…LTIL, and IILL…LVMV.

It belongs to the complex I subunit 4L family. As to quaternary structure, core subunit of respiratory chain NADH dehydrogenase (Complex I) which is composed of 45 different subunits.

The protein localises to the mitochondrion inner membrane. The enzyme catalyses a ubiquinone + NADH + 5 H(+)(in) = a ubiquinol + NAD(+) + 4 H(+)(out). Functionally, core subunit of the mitochondrial membrane respiratory chain NADH dehydrogenase (Complex I) which catalyzes electron transfer from NADH through the respiratory chain, using ubiquinone as an electron acceptor. Part of the enzyme membrane arm which is embedded in the lipid bilayer and involved in proton translocation. This Balaenoptera omurai (Omura's baleen whale) protein is NADH-ubiquinone oxidoreductase chain 4L (MT-ND4L).